The following is a 486-amino-acid chain: MDIFYNLIKCLIFSTYWLLIANITFRVLIKRRNIPYSMSWLLTIYIIPFIGISIWFFFGELYLGKRQKKIANRIWSISNKWLHELKSCTYIFQIKNSEVATSIFQLCKNRQGLHGIKSKKIKLLTNTKKIMQILIRDIYLARKNIEMVFYIWKPGGMADDVAIALIDSAKRGIHCRLMLDSAGSIEFFQSPWVEIMRKSGIQVVEALKVNLLRVFLRRVDVRQHRKIILIDNYIAYSGSMNLVDPYLFKKSSEIGQWIDLMTRIEGPIATTMGIIYSCDWEIETGLKILPQLPNKKMLENQSNKNASIQVIASGPGFLKNMIHQALLTAIYSAKRELIITTPYLVPSEDLLEAICTAAQRGVEVSIIIPLYNDSILVKWASRVFFSELLEAGVKIFQFQKGLLHSKSILVDQQLSLIGTVNLDMRSLWLNFEITLVIDDSDFGRNLFCIQNKYISDSQLIDKKAWSMRAYWKRILEKIFYFLSPLL.

The next 2 membrane-spanning stretches (helical) occupy residues Ile-3 to Ile-23 and Met-38 to Phe-58. 2 PLD phosphodiesterase domains span residues Val-219–Tyr-246 and Gln-399–Ser-426. Catalysis depends on residues His-224, Lys-226, Asp-231, His-404, Lys-406, and Asp-411.

Belongs to the phospholipase D family. Cardiolipin synthase subfamily. ClsA sub-subfamily.

It is found in the cell inner membrane. It carries out the reaction 2 a 1,2-diacyl-sn-glycero-3-phospho-(1'-sn-glycerol) = a cardiolipin + glycerol. Catalyzes the reversible phosphatidyl group transfer from one phosphatidylglycerol molecule to another to form cardiolipin (CL) (diphosphatidylglycerol) and glycerol. This is Cardiolipin synthase A from Buchnera aphidicola subsp. Acyrthosiphon pisum (strain APS) (Acyrthosiphon pisum symbiotic bacterium).